The chain runs to 254 residues: Tabinhibitin 6 (254 aa).

An N-terminal signal peptide occupies residues 1 to 22 (MLPYWCPLLLAALVLQYATIDA). The short motif at 31–33 (RGD) is the Cell attachment site element. An SCP domain is found at 66–210 (LSKINDVRDH…KARALLTCNF (145 aa)).

Belongs to the CRISP family. As to expression, expressed in salivary glands.

It is found in the secreted. Its function is as follows. Inhibits platelet aggregation induced by all agonists tested (ADP, arachidonic acid, the thromboxane A2 analog U46619, thrombin, and snake venom snaclecs (TMVA that activates platelet through GPIB, and stejnulxin that specifically acts through GPVI (GP6))). May act by competing with fibrinogen for binding to glycoprotein IIb/IIIa (ITGA2B/ITGB3). The sequence is that of Tabinhibitin 6 from Tabanus yao (Horsefly).